Reading from the N-terminus, the 101-residue chain is Small ribosomal subunit protein uS14 (101 aa).

The protein belongs to the universal ribosomal protein uS14 family. Part of the 30S ribosomal subunit. Contacts proteins S3 and S10.

Functionally, binds 16S rRNA, required for the assembly of 30S particles and may also be responsible for determining the conformation of the 16S rRNA at the A site. In Colwellia psychrerythraea (strain 34H / ATCC BAA-681) (Vibrio psychroerythus), this protein is Small ribosomal subunit protein uS14.